The primary structure comprises 204 residues: Viral interleukin-6 homolog (204 aa).

Positions 1–22 (MRWFKLWSILLVGSLLVSGTRG) are cleaved as a signal peptide.

This sequence belongs to the IL-6 superfamily. As to quaternary structure, interacts with host IL6ST.

Initiates signal transduction through binding to interleukin-6 receptor subunit beta IL6ST, independently of the cognate IL6 receptor IL6R. In infected primary effusion lymphoma cells, promotes proliferation of cells, protects them from apoptosis, and promotes immune evasion of interferon activity. Also drives blood to lymphatic endothelial cell differentiation. The polypeptide is Viral interleukin-6 homolog (K2) (Homo sapiens (Human)).